The sequence spans 241 residues: Endodeoxyribonuclease NucC (241 aa).

Active-site residues include D73, E104, and K106. D73 and E104 together coordinate Mg(2+).

Belongs to the NucC endonuclease family. Self-oligomerizes. Forms homotrimers; in the presence of cAAA the trimers associate face-to-face to form homohexamers. The 2 cAAA-binding sites are on the exterior of the hexamer at the three-way junction, there are maximally 2 cyclic nucleotides per hexamer. Mg(2+) serves as cofactor.

Its activity is regulated as follows. Activated by cAAA and to a lesser extent cAA and cAAG; cAAA and cAA are products of its cognate CD-NTase. Cyclic nucleotide binding causes hexamerization. Cyclic nucleotide binding causes a series of shifts that enclose the cAAA molecule, enable hexamer formation and juxtapose pairs of active sites to allow dsDNA cleavage. Effector DNase of a CBASS antivirus system. CBASS (cyclic oligonucleotide-based antiphage signaling system) provides immunity against bacteriophage. The CD-NTase protein synthesizes cyclic nucleotides in response to infection; these serve as specific second messenger signals. The signals activate a diverse range of effectors, leading to bacterial cell death and thus abortive phage infection. A type III-C(AAA) CBASS system. In terms of biological role, a cyclic nucleotide-activated dsDNase. In the presence of 3',3',3'-cyclic AMP-AMP-AMP (cAAA), and to a lesser extent 3',3',3'-cyclic AMP-AMP-GMP (cAAG) and cyclic-di-AMP (c-di-AMP), endonucleolytically degrades dsDNA. Binds one cAAA in a pocket on one surface of the trimer; cAAA binding promotes hexamerization, which is necessary for nuclease activation. Also binds c-diAMP or linear di-AMP with lower affinity. The nuclease digests dsDNA to about 50 bp lengths with a 2-base 3' overhang and a consensus recognition site of 5'-Axx|T-3'. DNA has been modeled to contact a pair of juxtaposed active sites (one from each layer of the hexamer), accounting for cleavage on both strands and the 2-base overhang. Its function is as follows. Protects E.coli strain JP313 against bacteriophage lambda cI- infection. When the cdnC-cap7-cap6-nucC operon is transformed into a susceptible strain it confers bacteriophage immunity. Mutations in the sensor (Cap7 also called HORMA) or effector proteins (CdnC, NucC) but not the disassembly protein (Cap6 also called Trip13) no longer confer immunity. The presence of the intact operon leads to culture collapse and cell death which occurs before the phage has finished its replication cycle, thus protecting non-infected bacteria by aborting the phage infection and preventing its propagation. This Escherichia coli (strain MS 115-1) protein is Endodeoxyribonuclease NucC.